The following is a 356-amino-acid chain: GDP-mannose:di-myo-inositol-1,3'-phosphate beta-1,2-mannosyltransferase (356 aa).

It belongs to the MDIP synthase family. The cofactor is Mg(2+).

The catalysed reaction is bis(myo-inositol) 1,3'-phosphate + GDP-alpha-D-mannose = 2-O-(beta-D-mannosyl)-bis(myo-inositol) 1,3'-phosphate + GDP + H(+). The enzyme catalyses 2-O-(beta-D-mannosyl)-bis(myo-inositol) 1,3'-phosphate + GDP-alpha-D-mannose = 2-O-(beta-D-mannosyl-(1-&gt;2)-beta-D-mannosyl)-bis(myo-inositol) 1,3'-phosphate + GDP + H(+). It carries out the reaction bis(myo-inositol) 1,3'-phosphate + 2 GDP-alpha-D-mannose = 2-O-(beta-D-mannosyl-(1-&gt;2)-beta-D-mannosyl)-bis(myo-inositol) 1,3'-phosphate + 2 GDP + 2 H(+). Functionally, catalyzes the transfer of the mannosyl group from GDP-mannose to di-myo-inositol-1,3'-phosphate (DIP), producing mannosyl-di-myo-inositol phosphate (MDIP). Can also use MDIP as an acceptor of a second mannose residue, yielding di-mannosyl-di-myo-inositol phosphate (MMDIP). This Aquifex aeolicus (strain VF5) protein is GDP-mannose:di-myo-inositol-1,3'-phosphate beta-1,2-mannosyltransferase.